The chain runs to 190 residues: NHNPECIVNEPLGTDIVSPPVCGNELLEVGEECDCGTPENCQNECCDAATCKLKSGSQCGHGDCCEQCKFSKSGTECRESMSECDPAEHCSGQCSECPADVFHKNGQPCLDNYGYCYNGNCPIMYHQCYALWGADVYEAEDSCFESNKKGNYYYGYCRKENGKKIPCAPEDVKCGRLYCKDNSPGQNGPC.

Residues 1-11 (NHNPECIVNEP) enclose the Peptidase M12B domain. Residues 19 to 105 (PPVCGNELLE…ECPADVFHKN (87 aa)) form the Disintegrin domain. Ca(2+)-binding residues include valine 21, asparagine 24, leucine 26, glutamate 28, glutamate 31, and aspartate 34. 6 disulfides stabilise this stretch: cysteine 33–cysteine 51, cysteine 35–cysteine 46, cysteine 45–cysteine 68, cysteine 59–cysteine 65, cysteine 64–cysteine 90, and cysteine 77–cysteine 97. The short motif at 83–85 (ECD) is the D/ECD-tripeptide element. 5 residues coordinate Ca(2+): aspartate 85, proline 86, glutamate 88, aspartate 100, and valine 101. A propeptide spanning residues 104–190 (KNGQPCLDNY…DNSPGQNGPC (87 aa)) is cleaved from the precursor.

The protein belongs to the venom metalloproteinase (M12B) family. P-III subfamily. As to quaternary structure, monomer. Requires Zn(2+) as cofactor. As to expression, expressed by the venom gland.

It localises to the secreted. Its function is as follows. Impairs hemostasis in the envenomed animal. In terms of biological role, inhibits platelet aggregation induced by ADP, thrombin, platelet-activating factor and collagen. Acts by inhibiting fibrinogen interaction with platelet receptors GPIIb/GPIIIa (ITGA2B/ITGB3). The polypeptide is Zinc metalloproteinase/disintegrin (Gloydius brevicauda (Korean slamosa snake)).